The following is a 526-amino-acid chain: Medium/long-chain-fatty-acid--[acyl-carrier-protein] ligase MbtM (526 aa).

Residues lysine 260 and lysine 511 each carry the N6-acetyllysine; by Pat modification.

The protein belongs to the ATP-dependent AMP-binding enzyme family. Acetylated on Lys-511 and Lys-260 by Pat. Lys-511 is the major acetylation site. Acetylation results in the inactivation of the enzyme.

The catalysed reaction is a long-chain fatty acid + holo-[ACP] + ATP = a long-chain fatty acyl-[ACP] + AMP + diphosphate. It carries out the reaction a medium-chain fatty acid + holo-[ACP] + ATP = a medium-chain fatty acyl-[ACP] + AMP + diphosphate. The enzyme catalyses hexadecanoate + holo-[ACP] + ATP = hexadecanoyl-[ACP] + AMP + diphosphate. It catalyses the reaction hexadecanoate + ATP + H(+) = hexadecanoyl-AMP + diphosphate. The catalysed reaction is hexadecanoyl-AMP + holo-[ACP] = hexadecanoyl-[ACP] + AMP + H(+). It carries out the reaction dodecanoate + holo-[ACP] + ATP = dodecanoyl-[ACP] + AMP + diphosphate. The enzyme catalyses dodecanoate + ATP + H(+) = dodecanoyl-AMP + diphosphate. It catalyses the reaction dodecanoyl-AMP + holo-[ACP] = dodecanoyl-[ACP] + AMP + H(+). It participates in siderophore biosynthesis; mycobactin biosynthesis. Reversibly inactivated by post-translational acetylation by Pat in a cAMP-dependent manner and reactivated by Sir2 deacylase. In terms of biological role, activates lipidic moieties required for mycobactin biosynthesis. Converts medium- to long-chain aliphatic fatty acids into acyl adenylate, which is further transferred on to the phosphopantetheine arm of the carrier protein MbtL. Shows a strong preference for palmitic acid (C16) and cannot use short-chain fatty acids. Proceeds via a Bi Uni Uni Bi ping-pong mechanism. During the first half-reaction (adenylation), fatty acid binds first to the free enzyme, followed by ATP and the release of pyrophosphate to form the adenylate intermediate. During the second half-reaction (ligation), holo-MbtL binds to the enzyme followed by the release of products AMP and acylated MbtL. In Mycolicibacterium smegmatis (strain ATCC 700084 / mc(2)155) (Mycobacterium smegmatis), this protein is Medium/long-chain-fatty-acid--[acyl-carrier-protein] ligase MbtM.